A 279-amino-acid chain; its full sequence is Phosphatidylglycerol--prolipoprotein diacylglyceryl transferase (279 aa).

3 consecutive transmembrane segments (helical) span residues 18–38 (LSVR…YFVA), 55–75 (IIFY…VIFQ), and 89–109 (IWHG…AGVI). Position 137 (R137) interacts with a 1,2-diacyl-sn-glycero-3-phospho-(1'-sn-glycerol). 2 helical membrane-spanning segments follow: residues 203-223 (LGET…FIEG) and 235-255 (IRVA…LIVY).

The protein belongs to the Lgt family.

The protein localises to the cell membrane. The enzyme catalyses L-cysteinyl-[prolipoprotein] + a 1,2-diacyl-sn-glycero-3-phospho-(1'-sn-glycerol) = an S-1,2-diacyl-sn-glyceryl-L-cysteinyl-[prolipoprotein] + sn-glycerol 1-phosphate + H(+). It functions in the pathway protein modification; lipoprotein biosynthesis (diacylglyceryl transfer). Functionally, catalyzes the transfer of the diacylglyceryl group from phosphatidylglycerol to the sulfhydryl group of the N-terminal cysteine of a prolipoprotein, the first step in the formation of mature lipoproteins. The protein is Phosphatidylglycerol--prolipoprotein diacylglyceryl transferase of Staphylococcus aureus (strain bovine RF122 / ET3-1).